A 156-amino-acid chain; its full sequence is Small ribosomal subunit protein uS7 (156 aa).

This sequence belongs to the universal ribosomal protein uS7 family. Part of the 30S ribosomal subunit. Contacts proteins S9 and S11.

Its function is as follows. One of the primary rRNA binding proteins, it binds directly to 16S rRNA where it nucleates assembly of the head domain of the 30S subunit. Is located at the subunit interface close to the decoding center, probably blocks exit of the E-site tRNA. In Salinispora arenicola (strain CNS-205), this protein is Small ribosomal subunit protein uS7.